A 166-amino-acid polypeptide reads, in one-letter code: Large ribosomal subunit protein bL19 (166 aa).

It belongs to the bacterial ribosomal protein bL19 family.

Functionally, this protein is located at the 30S-50S ribosomal subunit interface and may play a role in the structure and function of the aminoacyl-tRNA binding site. The protein is Large ribosomal subunit protein bL19 of Chelativorans sp. (strain BNC1).